We begin with the raw amino-acid sequence, 250 residues long: Myelin basic protein (250 aa).

Positions 1–28 (MGNHSGKRELSAEKASKDGEIHRGEAGK) are enriched in basic and acidic residues. The disordered stretch occupies residues 1-150 (MGNHSGKREL…SQRSKYLATA (150 aa)). Glycine 2 carries the N-acetylalanine modification. Serine 31 and serine 40 each carry phosphoserine. Basic and acidic residues predominate over residues 95 to 113 (FSRDAPGREDNTFKDRPSE). Position 96 is a phosphothreonine (serine 96). Glutamate 113 is subject to Phosphoserine. Glutamate 122 is subject to Phosphothreonine. Threonine 125 bears the Phosphotyrosine mark. A phosphoserine mark is found at alanine 135, arginine 139, serine 141, and serine 144. Residues tyrosine 146 and leucine 147 each carry the phosphotyrosine modification. Threonine 149 is subject to Phosphothreonine. A Phosphoserine modification is found at serine 151. Position 151 is a phosphotyrosine (serine 151). Threonine 152 carries the phosphothreonine modification. Citrulline is present on residues arginine 157 and arginine 163. At threonine 167 the chain carries Phosphothreonine. Serine 172 carries the phosphoserine modification. Arginine 175 and arginine 181 each carry omega-N-methylarginine. The interval 175–250 (RFFSGDRGAP…SRSGSPMARR (76 aa)) is disordered. At serine 188 the chain carries Phosphoserine. Residue threonine 197 is modified to Phosphothreonine. The segment covering 197–206 (THYGSLPQKS) has biased composition (polar residues). At tyrosine 199 the chain carries Phosphotyrosine. A Phosphoserine modification is found at serine 206. 3 positions are modified to phosphothreonine: threonine 211, threonine 226, and threonine 229. Position 234 is a deamidated glutamine (glutamine 234). At arginine 239 the chain carries Citrulline. A Phosphoserine modification is found at serine 241. A Phosphoserine; by UHMK1 modification is found at serine 245. Residue arginine 250 is modified to Citrulline.

The protein belongs to the myelin basic protein family. Homodimer. Post-translationally, as in other animals, several charge isomers may be produced as a result of optional post-translational modifications, such as phosphorylation of serine or threonine residues, deamidation of glutamine or asparagine residues, citrullination and methylation of arginine residues. Methylated on arginine residues; decreases with the age of the animal, making MBP more cationic. In terms of processing, phosphorylated by TAOK2, VRK2, MAPK11, MAPK12, MAPK14 and MINK1. Post-translationally, proteolytically cleaved in B cell lysosomes by cathepsin CTSG which degrades the major immunogenic MBP epitope and prevents the activation of MBP-specific autoreactive T cells. In the embryo, isoform 1-isoform 3 are found in neurons within the central nervous system (primarily in pioneer neurons important in the formation of the cortex) and the peripheral nervous system. They are also expressed in the thymus, gut, lung and kidney. In the adult, isoform 1-isoform 3 are highly expressed in the brain (mainly in brain regions rich in oligodendrocytes) and spleen. Lower levels are seen in the heart, kidney and lung. Isoform 2 is also found in cells of the immune system. The isoforms missing the 134 first amino acids (isoform 4-isoform 13) are almost exclusively produced in the myelin-forming cells, the mature oligodendrocytes.

It is found in the myelin membrane. The protein localises to the cytoplasm. It localises to the nucleus. In terms of biological role, the classic group of MBP isoforms (isoform 4-isoform 13) are with PLP the most abundant protein components of the myelin membrane in the CNS. They have a role in both its formation and stabilization. The non-classic group of MBP isoforms (isoform 1-isoform 3/Golli-MBPs) may preferentially have a role in the early developing brain long before myelination, maybe as components of transcriptional complexes, and may also be involved in signaling pathways in T-cells and neural cells. Differential splicing events combined to optional post-translational modifications give a wide spectrum of isomers, with each of them potentially having a specialized function. The polypeptide is Myelin basic protein (Mbp) (Mus musculus (Mouse)).